The following is a 328-amino-acid chain: Glycerol-3-phosphate dehydrogenase [NAD(P)+] (328 aa).

Residues Trp-15, His-35, Tyr-51, and Lys-107 each contribute to the NADPH site. Sn-glycerol 3-phosphate-binding residues include Lys-107, Gly-135, and Ser-137. Ala-139 is a binding site for NADPH. The sn-glycerol 3-phosphate site is built by Lys-190, Asp-243, Ser-253, Arg-254, and Asn-255. Catalysis depends on Lys-190, which acts as the Proton acceptor. Residue Arg-254 participates in NADPH binding. 2 residues coordinate NADPH: Leu-276 and Glu-278.

This sequence belongs to the NAD-dependent glycerol-3-phosphate dehydrogenase family.

It localises to the cytoplasm. The enzyme catalyses sn-glycerol 3-phosphate + NAD(+) = dihydroxyacetone phosphate + NADH + H(+). It carries out the reaction sn-glycerol 3-phosphate + NADP(+) = dihydroxyacetone phosphate + NADPH + H(+). The protein operates within membrane lipid metabolism; glycerophospholipid metabolism. In terms of biological role, catalyzes the reduction of the glycolytic intermediate dihydroxyacetone phosphate (DHAP) to sn-glycerol 3-phosphate (G3P), the key precursor for phospholipid synthesis. This chain is Glycerol-3-phosphate dehydrogenase [NAD(P)+], found in Rhodopseudomonas palustris (strain BisA53).